Here is a 98-residue protein sequence, read N- to C-terminus: NADH-ubiquinone oxidoreductase chain 4L (98 aa).

3 consecutive transmembrane segments (helical) span residues 1-21 (MPYI…GTLM), 29-49 (SLLC…LLSL), and 61-81 (LILL…LVMI).

Belongs to the complex I subunit 4L family. As to quaternary structure, core subunit of respiratory chain NADH dehydrogenase (Complex I) which is composed of 45 different subunits.

The protein resides in the mitochondrion inner membrane. The enzyme catalyses a ubiquinone + NADH + 5 H(+)(in) = a ubiquinol + NAD(+) + 4 H(+)(out). Functionally, core subunit of the mitochondrial membrane respiratory chain NADH dehydrogenase (Complex I) which catalyzes electron transfer from NADH through the respiratory chain, using ubiquinone as an electron acceptor. Part of the enzyme membrane arm which is embedded in the lipid bilayer and involved in proton translocation. The sequence is that of NADH-ubiquinone oxidoreductase chain 4L (MT-ND4L) from Elephas maximus (Indian elephant).